The chain runs to 168 residues: Putative peroxiredoxin prxA (168 aa).

The Thioredoxin domain maps to Leu4–Phe158. Cys61 functions as the Cysteine sulfenic acid (-SOH) intermediate in the catalytic mechanism.

Belongs to the peroxiredoxin family. Prx5 subfamily. Homodimer; disulfide-linked, upon oxidation. Interacts with thioredoxin trxA.

The enzyme catalyses a hydroperoxide + [thioredoxin]-dithiol = an alcohol + [thioredoxin]-disulfide + H2O. Functionally, thiol-specific peroxidase that catalyzes the reduction of hydrogen peroxide and organic hydroperoxides to water and alcohols, respectively. Plays a role in cell protection against oxidative stress by detoxifying peroxides and as sensor of hydrogen peroxide-mediated signaling events. Involved in osmoadaptation. This is Putative peroxiredoxin prxA from Emericella nidulans (strain FGSC A4 / ATCC 38163 / CBS 112.46 / NRRL 194 / M139) (Aspergillus nidulans).